We begin with the raw amino-acid sequence, 361 residues long: Dynein axonemal assembly factor 8 (361 aa).

2 disordered regions span residues 65 to 191 (DPAG…ERRK) and 309 to 334 (AQPG…RRPL). Residues 136-157 (TLNTSASQSPRQGPQGEATRSP) show a composition bias toward polar residues. Residues serine 142 and serine 144 each carry the phosphoserine modification. The span at 321–334 (GSSSSSGHLGRRPL) shows a compositional bias: low complexity.

It is found in the dynein axonemal particle. The protein localises to the cytoplasm. Its function is as follows. In cyliated cells, dynein axonemal particle-specific protein required for deployment of ODA to the axoneme. Interacts with outer dynein arm (ODA) subunits. The polypeptide is Dynein axonemal assembly factor 8 (DNAAF8) (Bos taurus (Bovine)).